A 588-amino-acid chain; its full sequence is WD repeat-containing protein DDB_G0349043 (588 aa).

Residues 1–32 (MPLDNKVQLNENGKEVNNNNNNDEDLKIQDNH) form a disordered region. The 33-residue stretch at 40 to 72 (NRSELVRLLIQSLNSLGYDKSAEFLEKDSGISL) folds into the LisH domain. Residues 73–129 (QSKEINQFSECVVSGDWNKVEELLPFLKLNEFDTNNVKFLVYSQKFLEYLENHKIKE) enclose the CTLH domain. 3 WD repeats span residues 244 to 283 (KHRDEIWFITFSHDGQRLASSSKDNTIIIWDMSTIYLDQP), 294 to 333 (GHTKEVSHLSWSPNDKYLLSASNDSTVKLWNTNDGTLLKT), and 336 to 375 (KHSDAVTCCGWHPDNKRFVSGGNDKNIYLWSIENLDLTNS). The disordered stretch occupies residues 376–403 (NNNNNNHNNNNSNINGNSINGSNNNGNN). 4 WD repeats span residues 413 to 452 (WACARVNDLSIHKDGKQLIIICQEKKLRIYDLENEKTPEV), 455 to 494 (METDAITSMELSNDCNFALVNTSNQEIHLWDLEKQIIVQK), 499 to 539 (KQGR…LLET), and 542 to 582 (RHSG…NSFI).

The chain is WD repeat-containing protein DDB_G0349043 from Dictyostelium discoideum (Social amoeba).